The chain runs to 417 residues: UDP-N-acetylglucosamine 1-carboxyvinyltransferase (417 aa).

Position 22 to 23 (22 to 23 (KN)) interacts with phosphoenolpyruvate. Residue Arg93 coordinates UDP-N-acetyl-alpha-D-glucosamine. The Proton donor role is filled by Cys117. Cys117 is subject to 2-(S-cysteinyl)pyruvic acid O-phosphothioketal. UDP-N-acetyl-alpha-D-glucosamine contacts are provided by residues 122–126 (RPVDQ), Asp305, and Ile327.

This sequence belongs to the EPSP synthase family. MurA subfamily.

The protein resides in the cytoplasm. The catalysed reaction is phosphoenolpyruvate + UDP-N-acetyl-alpha-D-glucosamine = UDP-N-acetyl-3-O-(1-carboxyvinyl)-alpha-D-glucosamine + phosphate. The protein operates within cell wall biogenesis; peptidoglycan biosynthesis. Cell wall formation. Adds enolpyruvyl to UDP-N-acetylglucosamine. The polypeptide is UDP-N-acetylglucosamine 1-carboxyvinyltransferase (Nitrosomonas europaea (strain ATCC 19718 / CIP 103999 / KCTC 2705 / NBRC 14298)).